Reading from the N-terminus, the 635-residue chain is 1-deoxy-D-xylulose-5-phosphate synthase (635 aa).

Residues His-78 and 119 to 121 (GHA) contribute to the thiamine diphosphate site. Position 151 (Asp-151) interacts with Mg(2+). Residues 152–153 (GA), Asn-180, and Tyr-291 each bind thiamine diphosphate. Asn-180 lines the Mg(2+) pocket. The segment at 305 to 325 (PAFEDRGGTPVTRGSDGRPPY) is disordered. Glu-374 provides a ligand contact to thiamine diphosphate.

The protein belongs to the transketolase family. DXPS subfamily. Homodimer. Mg(2+) is required as a cofactor. The cofactor is thiamine diphosphate.

The enzyme catalyses D-glyceraldehyde 3-phosphate + pyruvate + H(+) = 1-deoxy-D-xylulose 5-phosphate + CO2. It functions in the pathway metabolic intermediate biosynthesis; 1-deoxy-D-xylulose 5-phosphate biosynthesis; 1-deoxy-D-xylulose 5-phosphate from D-glyceraldehyde 3-phosphate and pyruvate: step 1/1. Catalyzes the acyloin condensation reaction between C atoms 2 and 3 of pyruvate and glyceraldehyde 3-phosphate to yield 1-deoxy-D-xylulose-5-phosphate (DXP). In Rhodopirellula baltica (strain DSM 10527 / NCIMB 13988 / SH1), this protein is 1-deoxy-D-xylulose-5-phosphate synthase.